The following is a 337-amino-acid chain: RNA 3'-terminal phosphate cyclase (337 aa).

ATP contacts are provided by residues Gln100 and 281 to 285 (YMGDQ). His306 acts as the Tele-AMP-histidine intermediate in catalysis.

It belongs to the RNA 3'-terminal cyclase family. Type 1 subfamily.

The protein resides in the cytoplasm. It catalyses the reaction a 3'-end 3'-phospho-ribonucleotide-RNA + ATP = a 3'-end 2',3'-cyclophospho-ribonucleotide-RNA + AMP + diphosphate. Its function is as follows. Catalyzes the conversion of 3'-phosphate to a 2',3'-cyclic phosphodiester at the end of RNA. The mechanism of action of the enzyme occurs in 3 steps: (A) adenylation of the enzyme by ATP; (B) transfer of adenylate to an RNA-N3'P to produce RNA-N3'PP5'A; (C) and attack of the adjacent 2'-hydroxyl on the 3'-phosphorus in the diester linkage to produce the cyclic end product. The biological role of this enzyme is unknown but it is likely to function in some aspects of cellular RNA processing. The sequence is that of RNA 3'-terminal phosphate cyclase (rtcA) from Methanothermobacter thermautotrophicus (strain ATCC 29096 / DSM 1053 / JCM 10044 / NBRC 100330 / Delta H) (Methanobacterium thermoautotrophicum).